Here is a 41-residue protein sequence, read N- to C-terminus: Large ribosomal subunit protein bL36 (41 aa).

This sequence belongs to the bacterial ribosomal protein bL36 family.

This Bartonella henselae (strain ATCC 49882 / DSM 28221 / CCUG 30454 / Houston 1) (Rochalimaea henselae) protein is Large ribosomal subunit protein bL36.